A 547-amino-acid polypeptide reads, in one-letter code: Large cysteine-rich periplasmic protein OmcB, serovar E (547 aa).

The signal sequence occupies residues 1 to 22 (MNKLIRRAVTIFAVTSVASLFA). Residues 23–40 (SGVLETSMAESLSTNVIS) constitute a propeptide that is removed on maturation. A disordered region spans residues 46-83 (AKDNTSHKSKKARKNHSKETLVDRKEVAPVHESKATGP). Residues 52–61 (HKSKKARKNH) show a composition bias toward basic residues. Residues 62–79 (SKETLVDRKEVAPVHESK) show a composition bias toward basic and acidic residues.

Part of a disulfide cross-linked outer membrane complex (COMC) composed of the major outer membrane porin (MOMP), the small cysteine-rich protein (OmcA) and the large cysteine-rich periplasmic protein (OmcB).

The protein resides in the periplasm. Its function is as follows. In elementary bodies (EBs, the infectious stage, which is able to survive outside the host cell) provides the structural integrity of the outer envelope through disulfide cross-links with the small cysteine-rich protein and the major outer membrane protein. It has been described in publications as the Sarkosyl-insoluble COMC (Chlamydia outer membrane complex), and serves as the functional equivalent of peptidoglycan. This Chlamydia trachomatis protein is Large cysteine-rich periplasmic protein OmcB, serovar E (omcB).